Consider the following 339-residue polypeptide: Phenylalanine--tRNA ligase alpha subunit (339 aa).

Position 250 (Glu-250) interacts with Mg(2+).

Belongs to the class-II aminoacyl-tRNA synthetase family. Phe-tRNA synthetase alpha subunit type 1 subfamily. As to quaternary structure, tetramer of two alpha and two beta subunits. The cofactor is Mg(2+).

It is found in the cytoplasm. The catalysed reaction is tRNA(Phe) + L-phenylalanine + ATP = L-phenylalanyl-tRNA(Phe) + AMP + diphosphate + H(+). This Flavobacterium johnsoniae (strain ATCC 17061 / DSM 2064 / JCM 8514 / BCRC 14874 / CCUG 350202 / NBRC 14942 / NCIMB 11054 / UW101) (Cytophaga johnsonae) protein is Phenylalanine--tRNA ligase alpha subunit.